The sequence spans 206 residues: MLEARDVVCIRDEHVLFSALSFTASSGEMVQIAGANGVGKTSLLRMLSGLATPESGDVCWQGQRINRIREHFNQQLLWLGHQPGIKSVLTGEENLRFFYPQQHQDAHWQALAAVGLAGYEDVPVARLSAGQQRRVALARLWLTDVPLWILDEPLTALDVAGVEMLTQRMEHHIAHGGIIILTTHQPLRPFAQSIRCIQLTPSEGTP.

Residues 2–206 (LEARDVVCIR…IQLTPSEGTP (205 aa)) form the ABC transporter domain. An ATP-binding site is contributed by 34–41 (GANGVGKT).

It belongs to the ABC transporter superfamily. CcmA exporter (TC 3.A.1.107) family. As to quaternary structure, the complex is composed of two ATP-binding proteins (CcmA) and two transmembrane proteins (CcmB).

It localises to the cell inner membrane. The catalysed reaction is heme b(in) + ATP + H2O = heme b(out) + ADP + phosphate + H(+). Functionally, part of the ABC transporter complex CcmAB involved in the biogenesis of c-type cytochromes; once thought to export heme, this seems not to be the case, but its exact role is uncertain. Responsible for energy coupling to the transport system. This chain is Cytochrome c biogenesis ATP-binding export protein CcmA, found in Pectobacterium atrosepticum (strain SCRI 1043 / ATCC BAA-672) (Erwinia carotovora subsp. atroseptica).